Consider the following 379-residue polypeptide: Homoserine O-succinyltransferase (379 aa).

An AB hydrolase-1 domain is found at 51–360 (NAVLICHALS…DAPQGHDAFL (310 aa)). Ser157 serves as the catalytic Nucleophile. Arg227 contacts substrate. Catalysis depends on residues Asp323 and His356. Asp357 contacts substrate.

It belongs to the AB hydrolase superfamily. MetX family. As to quaternary structure, homodimer.

It is found in the cytoplasm. It carries out the reaction L-homoserine + succinyl-CoA = O-succinyl-L-homoserine + CoA. The protein operates within amino-acid biosynthesis; L-methionine biosynthesis via de novo pathway; O-succinyl-L-homoserine from L-homoserine: step 1/1. Its function is as follows. Transfers a succinyl group from succinyl-CoA to L-homoserine, forming succinyl-L-homoserine. The chain is Homoserine O-succinyltransferase from Pseudomonas fluorescens (strain ATCC BAA-477 / NRRL B-23932 / Pf-5).